A 284-amino-acid chain; its full sequence is MSVQDTKAVEFSMGHIRSSSVSLVAEATSNTNSEDKLSKVQLYEDLCRYEDTLSKLVESVDRFKPNLDIAKDLIRTDEALFENVKLLAEYDNIYRNLQKIDKDSEELDSKTRKILEILNECHDELKALPMLEQVEFEKNTILQQRSKINSTELLDYATKLSKFTKIPPTFDKGAVGPNNFIWPAEDALRRGMLAMASLHSKELTRIPGEEVEETEVPTVPPSQSEEQKGQMAKKEGTPKTDSFIFDGTAKEVGDEADNTKDKEKEENNDDALDLDLDLFDPDDF.

Position 2 is an N-acetylserine (serine 2). The segment at 205–284 (RIPGEEVEET…DLDLFDPDDF (80 aa)) is disordered. Basic and acidic residues predominate over residues 225–238 (EEQKGQMAKKEGTP). Threonine 237 carries the post-translational modification Phosphothreonine; by KIN28. Phosphoserine is present on serine 242. A compositionally biased stretch (basic and acidic residues) spans 248-265 (TAKEVGDEADNTKDKEKE). A compositionally biased stretch (acidic residues) spans 266–284 (ENNDDALDLDLDLFDPDDF).

This sequence belongs to the Mediator complex subunit 4 family. Component of the Mediator complex, which is composed of at least 21 subunits that form three structurally distinct submodules. The Mediator head module contains MED6, MED8, MED11, SRB4/MED17, SRB5/MED18, ROX3/MED19, SRB2/MED20 and SRB6/MED22, the middle module contains MED1, MED4, NUT1/MED5, MED7, CSE2/MED9, NUT2/MED10, SRB7/MED21 and SOH1/MED31, and the tail module contains MED2, PGD1/MED3, RGR1/MED14, GAL11/MED15 and SIN4/MED16. The head and the middle modules interact directly with RNA polymerase II, whereas the elongated tail module interacts with gene-specific regulatory proteins. MED4 interacts directly with MED1, MED7 and SRB7/MED21.

It is found in the nucleus. Functionally, component of the Mediator complex, a coactivator involved in the regulated transcription of nearly all RNA polymerase II-dependent genes. Mediator functions as a bridge to convey information from gene-specific regulatory proteins to the basal RNA polymerase II transcription machinery. The Mediator complex, having a compact conformation in its free form, is recruited to promoters by direct interactions with regulatory proteins and serves for the assembly of a functional preinitiation complex with RNA polymerase II and the general transcription factors. The Mediator complex unfolds to an extended conformation and partially surrounds RNA polymerase II, specifically interacting with the unphosphorylated form of the C-terminal domain (CTD) of RNA polymerase II. The Mediator complex dissociates from the RNA polymerase II holoenzyme and stays at the promoter when transcriptional elongation begins. The polypeptide is Mediator of RNA polymerase II transcription subunit 4 (MED4) (Saccharomyces cerevisiae (strain ATCC 204508 / S288c) (Baker's yeast)).